The chain runs to 537 residues: Putative cysteine ligase BshC (537 aa).

Belongs to the BshC family.

Involved in bacillithiol (BSH) biosynthesis. May catalyze the last step of the pathway, the addition of cysteine to glucosamine malate (GlcN-Mal) to generate BSH. The polypeptide is Putative cysteine ligase BshC (Staphylococcus saprophyticus subsp. saprophyticus (strain ATCC 15305 / DSM 20229 / NCIMB 8711 / NCTC 7292 / S-41)).